The chain runs to 156 residues: Small ribosomal subunit protein uS7 (156 aa).

This sequence belongs to the universal ribosomal protein uS7 family. Part of the 30S ribosomal subunit. Contacts proteins S9 and S11.

Its function is as follows. One of the primary rRNA binding proteins, it binds directly to 16S rRNA where it nucleates assembly of the head domain of the 30S subunit. Is located at the subunit interface close to the decoding center, probably blocks exit of the E-site tRNA. The chain is Small ribosomal subunit protein uS7 from Rhizobium leguminosarum bv. trifolii (strain WSM2304).